A 207-amino-acid chain; its full sequence is Interleukin-6 (207 aa).

An N-terminal signal peptide occupies residues 1-20 (MNSLSTSAFSLGLLLVMATA). Cys-67 and Cys-73 form a disulfide bridge. Position 76 is a phosphoserine (Ser-76). Cysteines 96 and 106 form a disulfide.

This sequence belongs to the IL-6 superfamily. Component of a hexamer of two molecules each of IL6, IL6R and IL6ST; first binds to IL6R to associate with the signaling subunit IL6ST. Interacts with IL6R (via the N-terminal ectodomain); this interaction may be affected by IL6R-binding with SORL1, hence decreasing IL6 cis signaling. Interacts with SORL1 (via the N-terminal ectodomain); this interaction leads to IL6 internalization and lysosomal degradation. May form a trimeric complex with the soluble SORL1 ectodomain and soluble IL6R receptor; this interaction might stabilize circulating IL6, hence promoting IL6 trans signaling.

The protein resides in the secreted. Its function is as follows. Cytokine with a wide variety of biological functions in immunity, tissue regeneration, and metabolism. Binds to IL6R, then the complex associates to the signaling subunit IL6ST/gp130 to trigger the intracellular IL6-signaling pathway. The interaction with the membrane-bound IL6R and IL6ST stimulates 'classic signaling', whereas the binding of IL6 and soluble IL6R to IL6ST stimulates 'trans-signaling'. Alternatively, 'cluster signaling' occurs when membrane-bound IL6:IL6R complexes on transmitter cells activate IL6ST receptors on neighboring receiver cells. In terms of biological role, IL6 is a potent inducer of the acute phase response. Rapid production of IL6 contributes to host defense during infection and tissue injury, but excessive IL6 synthesis is involved in disease pathology. In the innate immune response, is synthesized by myeloid cells, such as macrophages and dendritic cells, upon recognition of pathogens through toll-like receptors (TLRs) at the site of infection or tissue injury. In the adaptive immune response, is required for the differentiation of B cells into immunoglobulin-secreting cells. Plays a major role in the differentiation of CD4(+) T cell subsets. Essential factor for the development of T follicular helper (Tfh) cells that are required for the induction of germinal-center formation. Required to drive naive CD4(+) T cells to the Th17 lineage. Also required for proliferation of myeloma cells and the survival of plasmablast cells. Functionally, acts as an essential factor in bone homeostasis and on vessels directly or indirectly by induction of VEGF, resulting in increased angiogenesis activity and vascular permeability. Induces, through 'trans-signaling' and synergistically with IL1B and TNF, the production of VEGF. Involved in metabolic controls, is discharged into the bloodstream after muscle contraction increasing lipolysis and improving insulin resistance. 'Trans-signaling' in central nervous system also regulates energy and glucose homeostasis. Mediates, through GLP-1, crosstalk between insulin-sensitive tissues, intestinal L cells and pancreatic islets to adapt to changes in insulin demand. Also acts as a myokine. Plays a protective role during liver injury, being required for maintenance of tissue regeneration. Also has a pivotal role in iron metabolism by regulating HAMP/hepcidin expression upon inflammation or bacterial infection. Through activation of IL6ST-YAP-NOTCH pathway, induces inflammation-induced epithelial regeneration. The chain is Interleukin-6 (IL6) from Canis lupus familiaris (Dog).